A 500-amino-acid chain; its full sequence is Ribose import ATP-binding protein RbsA (500 aa).

ABC transporter domains are found at residues Ile-3–Glu-239 and Asp-246–Val-493. Gly-35 to Ser-42 is an ATP binding site.

This sequence belongs to the ABC transporter superfamily. Ribose importer (TC 3.A.1.2.1) family. In terms of assembly, the complex is composed of an ATP-binding protein (RbsA), two transmembrane proteins (RbsC) and a solute-binding protein (RbsB).

It is found in the cell membrane. The catalysed reaction is D-ribose(out) + ATP + H2O = D-ribose(in) + ADP + phosphate + H(+). Functionally, part of the ABC transporter complex RbsABC involved in ribose import. Responsible for energy coupling to the transport system. The protein is Ribose import ATP-binding protein RbsA of Lacticaseibacillus paracasei (strain ATCC 334 / BCRC 17002 / CCUG 31169 / CIP 107868 / KCTC 3260 / NRRL B-441) (Lactobacillus paracasei).